Here is a 247-residue protein sequence, read N- to C-terminus: Putative methyltransferase YqeM (247 aa).

Belongs to the methyltransferase superfamily.

Its function is as follows. May be a S-adenosyl-L-methionine (SAM)-dependent methyltransferase. In Bacillus subtilis (strain 168), this protein is Putative methyltransferase YqeM (yqeM).